The primary structure comprises 548 residues: SH2/SH3 adapter protein dreadlocks (548 aa).

Disordered regions lie at residues 12 to 37 (IPDS…QHQN), 57 to 92 (QVPV…TASS), and 113 to 146 (GSGS…MKHG). Positions 20 to 37 (QQYPQQQQHPPQLPQHQN) are enriched in low complexity. A compositionally biased stretch (gly residues) spans 113-122 (GSGSANGSGS). A compositionally biased stretch (low complexity) spans 123–135 (GNSSSGSAAGNAG). One can recognise an SH3 1 domain in the interval 150–209 (DDVCYVVAKYDYAAQGAQELDLRKNERYLLLDDSKHWWRVQNSRNQSGYVPSNYVKKEKP). The interval 219-247 (VKKGSGSKTLPNCSPSRQVESPTMSRRLP) is disordered. Polar residues predominate over residues 227-242 (TLPNCSPSRQVESPTM). SH3 domains follow at residues 252-311 (EAIG…EDCD) and 324-386 (NVLD…ELND). Positions 398 to 442 (SAGNGNGGGSNGGAGGGGGNDSMERRNEGNKPAAQSSGQPIERPN) are disordered. Over residues 401-417 (NGNGGGSNGGAGGGGGN) the composition is skewed to gly residues. The region spanning 448 to 542 (WYYGAITRSQ…GEKLYLVRSL (95 aa)) is the SH2 domain.

As to quaternary structure, interacts (via SH2 and SH3 domains) with Dscam1 (via cytoplasmic domain); the interaction is direct and requires Dscam1 to be phosphorylated. Interacts (via SH2 and SH3 domains) with InR/Insulin-like receptor (via C-terminal cytoplasmic region); the interaction requires InR kinase activity, probably for autophosphorylation stimulated by insulin signaling. Interacts with Ptp61F (via C-terminus); this interaction is independent of insulin stimulation. Interacts (via SH3 domain 2) with Pak (via N-terminal PXXP motif). In terms of processing, phosphorylated by Src42A and possibly by other tyrosine kinases. Constitutively dephosphorylated by its binding partner Ptp61F.

It is found in the perikaryon. The protein resides in the cell projection. It localises to the axon. The protein localises to the growth cone. In terms of biological role, adapter protein that links cell surface receptor tyrosine phosphorylation to downstream signaling pathways and effectors, many of which are involved in regulation of the actin cytoskeleton. Recruited by Dscam1/Down syndrome cell adhesion molecule homolog and InR/insulin-like receptor. Recruits Pak to membranes, probably when dock/dreadlocks is associated with activated receptors. Required for guidance and targeting of photoreceptor (R cell) axon projections but not for axon outgrowth, differentiation or target induction in the developing eye. As part of a signaling pathway that involves the lbm/late bloomer protein, involved in synapse formation of the RP3 motorneuron at the muscle 7/6 cleft, probably by stimulating axon defasciculation from other SNb neurons. This chain is SH2/SH3 adapter protein dreadlocks, found in Drosophila melanogaster (Fruit fly).